A 306-amino-acid polypeptide reads, in one-letter code: Tyrosine recombinase XerD (306 aa).

The Core-binding (CB) domain maps to 1–83 (MGFIAQFLEM…TIKSYYEFLI (83 aa)). Positions 104 to 299 (KLPEILSIAQ…QTNHLKKALL (196 aa)) constitute a Tyr recombinase domain. Residues Arg-145, Lys-176, His-251, Arg-254, and His-277 contribute to the active site. The active-site O-(3'-phospho-DNA)-tyrosine intermediate is Tyr-286.

This sequence belongs to the 'phage' integrase family. XerD subfamily. As to quaternary structure, forms a cyclic heterotetrameric complex composed of two molecules of XerC and two molecules of XerD.

It is found in the cytoplasm. In terms of biological role, site-specific tyrosine recombinase, which acts by catalyzing the cutting and rejoining of the recombining DNA molecules. The XerC-XerD complex is essential to convert dimers of the bacterial chromosome into monomers to permit their segregation at cell division. It also contributes to the segregational stability of plasmids. This chain is Tyrosine recombinase XerD, found in Rickettsia conorii (strain ATCC VR-613 / Malish 7).